The primary structure comprises 628 residues: MDTTMVNLWTLFEQLVRRMEIINEGNESIEFIQVVKDFEDFRKKYQRTNQELEKFKDLLLKAETGRSALDVKLKHARNQVDVEIKRRQRAEAECAKLEQQIQLIRDILMCDTSGSIQLSEEQKSALAFLNRGQASSGHAGNNRLSTIDESGSILSDISFDKTDESLDWDSSLVKNFKMKKREKRRSNSRQFIDGPPGPVKKTCSIGSTVDQANESIVAKTTVTVPSDGGPIEAVSTIETLPSWTRSRGKSGPLQPVNSDSALNSRPLEPRTDTDNLGTPQNTGGMRLHDFVSKTVIKPESCVPCGKRIKFGKLSLKCRDCRLVSHPECRDRCPLPCIPPLVGTPVKIGEGMLADFVSQASPMIPAIVVSCVNEIEQRGLTEAGLYRISGCDRTVKELKEKFLKVKTVPLLSKVDDIHVICSLLKDFLRNLKEPLLTFWLSKAFMEAAEITDEDNSTAAMYQAVSELPQANRDTLAFLMIHLQRVSQSPDTKMDIANLAKVFGPTIVAHTVPNPDPVTMFQDIKRQLKVVERLLSLPLEYWNQFMMVDQENIDSQRGNGNSTPRTPDVKVSLLGPVTTPEFQLVKTPLSSSLSQRLYNLSKSTPRFGNKSKSATNLGQQGKFFPAPYLK.

An N-acetylmethionine modification is found at Met-1. The stretch at 33-110 (QVVKDFEDFR…IQLIRDILMC (78 aa)) forms a coiled coil. Positions 107-286 (ILMCDTSGSI…GTPQNTGGMR (180 aa)) are interaction with SLC26A8. Ser-150 carries the phosphoserine; by PLK1 modification. The residue at position 155 (Ser-155) is a Phosphoserine. Residue Ser-158 is modified to Phosphoserine; by PLK1. Thr-162 bears the Phosphothreonine mark. Phosphoserine; by PLK1 occurs at positions 165 and 171. The interval 179-201 (KKREKRRSNSRQFIDGPPGPVKK) is disordered. Ser-204, Ser-207, and Ser-215 each carry phosphoserine. The interval 242–284 (SWTRSRGKSGPLQPVNSDSALNSRPLEPRTDTDNLGTPQNTGG) is disordered. Residue Lys-249 forms a Glycyl lysine isopeptide (Lys-Gly) (interchain with G-Cter in SUMO2) linkage. Ser-258 carries the post-translational modification Phosphoserine. The segment covering 274–283 (DNLGTPQNTG) has biased composition (polar residues). A Phorbol-ester/DAG-type zinc finger spans residues 287–336 (LHDFVSKTVIKPESCVPCGKRIKFGKLSLKCRDCRLVSHPECRDRCPLPC). Thr-343 is subject to Phosphothreonine. The Rho-GAP domain occupies 350–540 (GMLADFVSQA…RLLSLPLEYW (191 aa)). At Ser-388 the chain carries Phosphoserine; by AURKB. Residue Lys-405 forms a Glycyl lysine isopeptide (Lys-Gly) (interchain with G-Cter in SUMO2) linkage. Position 411 is a phosphoserine; by AURKB (Ser-411). A phosphothreonine mark is found at Thr-564, Thr-577, Thr-585, and Thr-602.

In terms of assembly, heterotetramer of two molecules each of RACGAP1 and KIF23. Found in the centralspindlin complex. Associates with alpha-, beta- and gamma-tubulin and microtubules. Interacts via its Rho-GAP domain with RND2. Associates with AURKB during M phase. Interacts via its Rho-GAP domain and basic region with PRC1. The interaction with PRC1 inhibits its GAP activity towards CDC42 in vitro, which may be required for maintaining normal spindle morphology. Interacts with SLC26A8 via its N-terminus. Interacts with ECT2; the interaction is direct, occurs at anaphase and during cytokinesis in a microtubule-dependent manner, is enhanced by phosphorylation by PLK1 and phosphorylation at Ser-165 plays a major role in mediating binding. Interacts with RAB11FIP3; the interaction occurs at late telophase. Interacts with KIF23; the interaction is direct. In terms of processing, phosphorylated at multiple sites in the midbody during cytokinesis. Phosphorylation by AURKB on Ser-388 at the midbody is, at least in part, responsible for exerting its latent GAP activity towards RhoA. Phosphorylation on multiple serine residues by PLK1 enhances its association with ECT2 and is critical for cleavage furrow formation. Phosphorylation on Ser-165 plays a major role in mediating interaction with ECT2. Phosphorylation on Ser-158 does not appear to contribute to binding to ECT2. Highly expressed in testis, thymus and spleen and weakly expressed in brain, heart, skeletal muscle and kidney. In testis, expression is restricted to germ cells with the highest levels of expression found in spermatocytes. Not detected in adult liver. Also expressed in fetal liver and in several hematopoietic cell lines.

Its subcellular location is the nucleus. It localises to the cytoplasm. It is found in the cytoskeleton. The protein resides in the spindle. The protein localises to the cytoplasmic vesicle. Its subcellular location is the secretory vesicle. It localises to the acrosome. It is found in the cleavage furrow. The protein resides in the midbody. The protein localises to the midbody ring. Its subcellular location is the cell membrane. Its function is as follows. Component of the centralspindlin complex that serves as a microtubule-dependent and Rho-mediated signaling required for the myosin contractile ring formation during the cell cycle cytokinesis. Required for proper attachment of the midbody to the cell membrane during cytokinesis. Sequentially binds to ECT2 and RAB11FIP3 which regulates cleavage furrow ingression and abscission during cytokinesis. Plays key roles in controlling cell growth and differentiation of hematopoietic cells through mechanisms other than regulating Rac GTPase activity. Has a critical role in erythropoiesis. Also involved in the regulation of growth-related processes in adipocytes and myoblasts. May be involved in regulating spermatogenesis and in the RACGAP1 pathway in neuronal proliferation. Shows strong GAP (GTPase activation) activity towards CDC42 and RAC1 and less towards RHOA. Essential for the early stages of embryogenesis. May play a role in regulating cortical activity through RHOA during cytokinesis. May participate in the regulation of sulfate transport in male germ cells. The sequence is that of Rac GTPase-activating protein 1 from Mus musculus (Mouse).